A 95-amino-acid polypeptide reads, in one-letter code: Co-chaperonin GroES (95 aa).

This sequence belongs to the GroES chaperonin family. In terms of assembly, heptamer of 7 subunits arranged in a ring. Interacts with the chaperonin GroEL.

Its subcellular location is the cytoplasm. Its function is as follows. Together with the chaperonin GroEL, plays an essential role in assisting protein folding. The GroEL-GroES system forms a nano-cage that allows encapsulation of the non-native substrate proteins and provides a physical environment optimized to promote and accelerate protein folding. GroES binds to the apical surface of the GroEL ring, thereby capping the opening of the GroEL channel. The sequence is that of Co-chaperonin GroES from Clostridium botulinum (strain ATCC 19397 / Type A).